A 203-amino-acid polypeptide reads, in one-letter code: Phosphatidylglycerophosphatase B (203 aa).

Residue Met1 is a topological domain, cytoplasmic. A helical transmembrane segment spans residues Tyr2–Ala17. At Ile18–Ser55 the chain is on the extracellular side. The helical transmembrane segment at Ser56–Lys74 threads the bilayer. At Thr75–Gly78 the chain is on the cytoplasmic side. The chain crosses the membrane as a helical span at residues Leu79–Ile99. The tract at residues Lys96–Pro104 is phosphatase sequence motif I. Topologically, residues Glu100–Ser119 are extracellular. Residues Pro118 to His121 are phosphatase sequence motif II. A helical membrane pass occupies residues Gly120–His139. Residue His121 is the Proton donors of the active site. Residues Leu140–His146 lie on the Cytoplasmic side of the membrane. Residues Lys147 to Tyr167 form a helical membrane-spanning segment. The interval Ser164 to Asp175 is phosphatase sequence motif III. At Leu168–Phe172 the chain is on the extracellular side. The Nucleophile role is filled by His171. Residues Val173–Lys196 form a helical membrane-spanning segment. The Cytoplasmic segment spans residues Ile197 to Lys203.

The protein belongs to the PA-phosphatase related phosphoesterase family.

It localises to the cell membrane. It catalyses the reaction a 1,2-diacyl-sn-glycero-3-phospho-(1'-sn-glycero-3'-phosphate) + H2O = a 1,2-diacyl-sn-glycero-3-phospho-(1'-sn-glycerol) + phosphate. Functionally, catalyzes the dephosphorylation of phosphatidylglycerophosphate (PGP) to phosphatidylglycerol. Also has undecaprenyl pyrophosphate phosphatase activity, required for the biosynthesis of the lipid carrier undecaprenyl phosphate. The polypeptide is Phosphatidylglycerophosphatase B (Bacillus subtilis (strain 168)).